The sequence spans 266 residues: GATA zinc finger domain-containing protein 1 (266 aa).

Residues 9–33 form a GATA-type zinc finger; that stretch reads CSMCKTTSSSMWKKSPQGEILCHHC. Positions 59 to 72 are enriched in low complexity; it reads TTTFATTSAGPSQS. Positions 59–112 are disordered; sequence TTTFATTSAGPSQSNGGGGGKQSKQEIHRRSARLRNTKYKSAPAAEKKVSTKGK. Lysine 259 participates in a covalent cross-link: Glycyl lysine isopeptide (Lys-Gly) (interchain with G-Cter in SUMO2).

As to quaternary structure, component of a chromatin complex, at least composed of KDM5A, GATAD1 and EMSY. In terms of tissue distribution, expressed in the eye (lens, ciliary body, retina, sclera and conjunctiva) at postnatal day 2 and 10. Not detected anywhere at postnatal day 14.

It is found in the nucleus. Its function is as follows. Component of some chromatin complex recruited to chromatin sites methylated 'Lys-4' of histone H3 (H3K4me), with a preference for trimethylated form (H3K4me3). This Mus musculus (Mouse) protein is GATA zinc finger domain-containing protein 1 (Gatad1).